A 507-amino-acid polypeptide reads, in one-letter code: Alkyl hydroperoxide reductase subunit F (507 aa).

Residue 207–222 (DVLIVGGGPASGSAAI) coordinates FAD. A disulfide bond links Cys335 and Cys338. Position 347–361 (347–361 (DVAVIGGGNSGVEAA)) interacts with NAD(+). 467–477 (TNVPGIFAAGD) contributes to the FAD binding site.

The protein belongs to the class-II pyridine nucleotide-disulfide oxidoreductase family. In terms of assembly, homodimer. FAD is required as a cofactor.

Functionally, serves to protect the cell against DNA damage by alkyl hydroperoxides. It can use either NADH or NADPH as electron donor for direct reduction of redox dyes or of alkyl hydroperoxides when combined with the AhpC protein. In Staphylococcus aureus (strain Mu50 / ATCC 700699), this protein is Alkyl hydroperoxide reductase subunit F (ahpF).